Reading from the N-terminus, the 200-residue chain is Recombination protein RecR (200 aa).

The C4-type zinc finger occupies 59–74 (CEKCNTFTEAQVCEVC). The 96-residue stretch at 82 to 177 (ALLCVVETPA…AVTRLARGVP (96 aa)) folds into the Toprim domain.

This sequence belongs to the RecR family.

Its function is as follows. May play a role in DNA repair. It seems to be involved in an RecBC-independent recombinational process of DNA repair. It may act with RecF and RecO. The sequence is that of Recombination protein RecR from Burkholderia pseudomallei (strain 1106a).